A 61-amino-acid chain; its full sequence is Small ribosomal subunit protein uS14 (61 aa).

Residues C24, C27, C40, and C43 each contribute to the Zn(2+) site.

Belongs to the universal ribosomal protein uS14 family. Zinc-binding uS14 subfamily. In terms of assembly, part of the 30S ribosomal subunit. Contacts proteins S3 and S10. Requires Zn(2+) as cofactor.

Its function is as follows. Binds 16S rRNA, required for the assembly of 30S particles and may also be responsible for determining the conformation of the 16S rRNA at the A site. This is Small ribosomal subunit protein uS14 from Rubrobacter xylanophilus (strain DSM 9941 / JCM 11954 / NBRC 16129 / PRD-1).